The primary structure comprises 427 residues: Glutamate-1-semialdehyde 2,1-aminomutase (427 aa).

Lys-265 is subject to N6-(pyridoxal phosphate)lysine.

The protein belongs to the class-III pyridoxal-phosphate-dependent aminotransferase family. HemL subfamily. In terms of assembly, homodimer. Pyridoxal 5'-phosphate serves as cofactor.

It is found in the cytoplasm. It catalyses the reaction (S)-4-amino-5-oxopentanoate = 5-aminolevulinate. It participates in porphyrin-containing compound metabolism; protoporphyrin-IX biosynthesis; 5-aminolevulinate from L-glutamyl-tRNA(Glu): step 2/2. The protein is Glutamate-1-semialdehyde 2,1-aminomutase of Burkholderia mallei (strain NCTC 10229).